The following is a 1494-amino-acid chain: Serine/threonine-protein kinase VPS15 (1494 aa).

Gly2 carries the N-myristoyl glycine lipid modification. In terms of domain architecture, Protein kinase spans 27 to 307 (LVLKEVLGRG…VFPNYFSPFL (281 aa)). ATP-binding positions include 33-41 (LGRGRFLKS) and Lys54. Residue Asp149 is the Proton acceptor of the active site. HEAT repeat units lie at residues 383 to 421 (NSKD…LYDS), 480 to 517 (DRLQ…LVRD), 524 to 562 (KIFP…TAYG), 610 to 646 (KTIA…FFGQ), 648 to 685 (QSND…FVGQ), 687 to 724 (SVEE…SSFL), and 727 to 764 (RALL…CLGA). Disordered regions lie at residues 859–903 (QSVE…TVEL) and 1037–1064 (SASV…SVPD). Low complexity predominate over residues 1037–1047 (SASVTSEDASS). WD repeat units lie at residues 1079-1118 (EHRS…KDIS), 1127-1166 (LEGS…RGLG), 1184-1226 (KEGA…DAWT), 1231-1270 (PEEG…PVNS), 1276-1323 (ICPI…CHQV), 1371-1409 (PRLP…RSYC), and 1466-1494 (DSVQ…KVWK).

This sequence belongs to the protein kinase superfamily. Ser/Thr protein kinase family. In terms of assembly, interacts with VPS34. Component of a complex made of VPS38/USL1 and PI3K main subunits such as VPS15, ATG6/VPS30 and VPS34. In terms of processing, autophosphorylated. As to expression, mainly expressed in anthers, pollen grains and pollen tubes, and, to a lower extent, in other tissues and organs including seedlings, roots, stems, leaves, flowers, pitils and siliques.

It is found in the cytoplasm. It localises to the golgi apparatus. Its subcellular location is the trans-Golgi network membrane. The protein resides in the endosome membrane. It carries out the reaction L-seryl-[protein] + ATP = O-phospho-L-seryl-[protein] + ADP + H(+). The catalysed reaction is L-threonyl-[protein] + ATP = O-phospho-L-threonyl-[protein] + ADP + H(+). In terms of biological role, serine/threonine-protein kinase required for cytoplasm to vacuole transport (Cvt) and autophagy as a part of the autophagy-specific VPS34 PI3-kinase complex I. Required for pollen development and germination, probably via the modulation of phosphatidylinositol 3-phosphate (PI3P) formation and vacuolar organization. This is Serine/threonine-protein kinase VPS15 from Arabidopsis thaliana (Mouse-ear cress).